A 105-amino-acid chain; its full sequence is Heme oxygenase (mycobilin-producing) (105 aa).

The ABM domain maps to 3 to 92; the sequence is VVKINAIEVP…VATGASLLEF (90 aa). Heme contacts are provided by residues 22-26, His75, and 83-86; these read RFAHR and VATG.

This sequence belongs to the antibiotic biosynthesis monooxygenase family. As to quaternary structure, homodimer.

It catalyses the reaction heme b + 3 AH2 + 3 O2 + 2 H(+) = mycobilin a + Fe(2+) + 3 A + 3 H2O. The catalysed reaction is heme b + 3 AH2 + 3 O2 + 2 H(+) = mycobilin b + Fe(2+) + 3 A + 3 H2O. Catalyzes the oxidative degradation of the heme macrocyclic porphyrin ring in the presence of a suitable electron donor such as ascorbate or NADPH--cytochrome P450 reductase, with subsequent release of free iron. The sequence is that of Heme oxygenase (mycobilin-producing) (mhuD) from Mycobacterium tuberculosis (strain CDC 1551 / Oshkosh).